Here is a 40-residue protein sequence, read N- to C-terminus: Alpha-1B-glycoprotein (40 aa).

A glycan (N-linked (GlcNAc...) asparagine) is linked at Asn23.

Interacts with CRISP3. Plasma.

It localises to the secreted. The chain is Alpha-1B-glycoprotein (A1BG) from Sus scrofa (Pig).